The chain runs to 195 residues: Glycerol-3-phosphate acyltransferase (195 aa).

Helical transmembrane passes span 2-22 (INLLVIISAYFIGNFSTSFIV), 79-99 (AALMAGIAVVIGHNWPVLLGF), 111-131 (VALIASPLAAIASISLGVVIL), and 146-166 (TILPFFLFSYGLEYFIFGLVL).

This sequence belongs to the PlsY family. Probably interacts with PlsX.

It localises to the cell membrane. It catalyses the reaction an acyl phosphate + sn-glycerol 3-phosphate = a 1-acyl-sn-glycero-3-phosphate + phosphate. The protein operates within lipid metabolism; phospholipid metabolism. Functionally, catalyzes the transfer of an acyl group from acyl-phosphate (acyl-PO(4)) to glycerol-3-phosphate (G3P) to form lysophosphatidic acid (LPA). This enzyme utilizes acyl-phosphate as fatty acyl donor, but not acyl-CoA or acyl-ACP. This is Glycerol-3-phosphate acyltransferase from Alkaliphilus metalliredigens (strain QYMF).